The primary structure comprises 417 residues: MGPRQGRWWLLLWLPPLATLPVRGEAAAAALSVRRCKALKEKDLIRTSESDCYCYNQNSQVEWKYIWSTMQVKITSPGLFRIVYIAERHNCQYPENILSFIKCVIHNFWIPKESNEITIIINPYRETVCFSVEPVKKIFNYMIHVNRNIMDFKLFLVFVAGVFLFFYARTLSQSPTFYYSSGTVLGVLMTLVFVLLLVKRFIPKYSTFWALMVGCWFASVYIVCQLMEDLKWLWYENRIYVLGYVLIVGFFSFVVCYKHGPLADDRSRSLLMWMLRLLSLVLVYAGVAVPQFAYAAIILLMSSWSLHYPLRACSYMRWKMEQWFTSKELVVKYLTEDEYREQADAETNSALEELRRACRKPDFPSWLVVSRLHTPSKFADFVLGGSHLSPEEISLHEEQYGLGGAFLEEQLFNPSTA.

An N-terminal signal peptide occupies residues 1 to 24 (MGPRQGRWWLLLWLPPLATLPVRG). Transmembrane regions (helical) follow at residues 148 to 168 (NIMDFKLFLVFVAGVFLFFYA), 177 to 197 (FYYSSGTVLGVLMTLVFVLLL), 207 to 227 (TFWALMVGCWFASVYIVCQLM), 239 to 259 (IYVLGYVLIVGFFSFVVCYKH), and 280 to 300 (LVLVYAGVAVPQFAYAAIILL).

It belongs to the NEMP family.

Its subcellular location is the nucleus inner membrane. The sequence is that of Nuclear envelope integral membrane protein 2 (NEMP2) from Homo sapiens (Human).